Reading from the N-terminus, the 191-residue chain is ATP synthase subunit b 2 (191 aa).

A compositionally biased stretch (basic and acidic residues) spans 1–12 (MAESHGEAKGGE). The interval 1-31 (MAESHGEAKGGEAKGTASAHTEAEGGHGFPP) is disordered. A helical transmembrane segment spans residues 38-60 (PSQIASLVIAFVALYVIVSRVAL).

Belongs to the ATPase B chain family. In terms of assembly, F-type ATPases have 2 components, F(1) - the catalytic core - and F(0) - the membrane proton channel. F(1) has five subunits: alpha(3), beta(3), gamma(1), delta(1), epsilon(1). F(0) has three main subunits: a(1), b(2) and c(10-14). The alpha and beta chains form an alternating ring which encloses part of the gamma chain. F(1) is attached to F(0) by a central stalk formed by the gamma and epsilon chains, while a peripheral stalk is formed by the delta and b chains.

The protein localises to the cell inner membrane. In terms of biological role, f(1)F(0) ATP synthase produces ATP from ADP in the presence of a proton or sodium gradient. F-type ATPases consist of two structural domains, F(1) containing the extramembraneous catalytic core and F(0) containing the membrane proton channel, linked together by a central stalk and a peripheral stalk. During catalysis, ATP synthesis in the catalytic domain of F(1) is coupled via a rotary mechanism of the central stalk subunits to proton translocation. Component of the F(0) channel, it forms part of the peripheral stalk, linking F(1) to F(0). The b'-subunit is a diverged and duplicated form of b found in plants and photosynthetic bacteria. The chain is ATP synthase subunit b 2 (atpF2) from Bradyrhizobium sp. (strain ORS 278).